The sequence spans 1187 residues: BAI1-associated protein 3 (1187 aa).

The disordered stretch occupies residues 55–81 (SFRRRTEQDPGSASADPQEPATGAWKP). Residues 176–335 (SLEEHTEAIE…VKSARANGTA (160 aa)) form the C2 1 domain. Positions 211, 217, 295, and 297 each coordinate Ca(2+). The 122-residue stretch at 663 to 784 (FELYLTLADL…EATLFYTELL (122 aa)) folds into the MHD1 domain. One can recognise an MHD2 domain in the interval 888-996 (DEAVAPLMKY…CSTRECIEQF (109 aa)). Residues 1010–1136 (RFGRLSVRCH…GVARPQVGGG (127 aa)) form the C2 2 domain. The Ca(2+) site is built by leucine 1040, aspartate 1041, aspartate 1047, aspartate 1105, aspartate 1107, serine 1110, and aspartate 1113.

This sequence belongs to the unc-13 family. In terms of assembly, interacts with ADGRB1; this interaction is direct. Interacts with endosomal SNARE proteins VAMP3, VAMP4, STX6 and STX16; this interaction is increased in the presence of calcium. Requires Ca(2+) as cofactor. As to expression, predominantly expressed in brain. Also expressed in nonneural tissues such as breast and testes epithelium.

It is found in the cytoplasm. The protein localises to the cytosol. Its subcellular location is the recycling endosome membrane. It localises to the late endosome membrane. The protein resides in the golgi apparatus. It is found in the trans-Golgi network membrane. The protein localises to the cell membrane. In terms of biological role, functions in endosome to Golgi retrograde transport. In response to calcium influx, may interact with SNARE fusion receptors and membrane phospholipids to mediate endosome fusion with the trans-Golgi network. By promoting the recycling of secretory vesicle transmembrane proteins, it indirectly controls dense-core secretory vesicle biogenesis, maturation and their ability to mediate the constitutive and regulated secretion of neurotransmitters and hormones. May regulate behavior and food intake by controlling calcium-stimulated exocytosis of neurotransmitters including NPY and serotonin and hormones like insulin. Proposed to play a role in hypothalamic neuronal firing by modulating gamma-aminobutyric acid (GABA)ergic inhibitory neurotransmission. This chain is BAI1-associated protein 3, found in Homo sapiens (Human).